The sequence spans 310 residues: Methionyl-tRNA formyltransferase (310 aa).

A (6S)-5,6,7,8-tetrahydrofolate-binding site is contributed by 111 to 114 (SLLP).

The protein belongs to the Fmt family.

It catalyses the reaction L-methionyl-tRNA(fMet) + (6R)-10-formyltetrahydrofolate = N-formyl-L-methionyl-tRNA(fMet) + (6S)-5,6,7,8-tetrahydrofolate + H(+). In terms of biological role, attaches a formyl group to the free amino group of methionyl-tRNA(fMet). The formyl group appears to play a dual role in the initiator identity of N-formylmethionyl-tRNA by promoting its recognition by IF2 and preventing the misappropriation of this tRNA by the elongation apparatus. The polypeptide is Methionyl-tRNA formyltransferase (Afipia carboxidovorans (strain ATCC 49405 / DSM 1227 / KCTC 32145 / OM5) (Oligotropha carboxidovorans)).